The sequence spans 1372 residues: Putative Polyprotein CP (1372 aa).

2 coiled-coil regions span residues 126–153 (NKENLERQELLLRQINELKEEIKSLKNI) and 299–350 (EKQK…EELD). The interval 372 to 398 (SESSEINEISDNETEQISGSDSDYNNE) is disordered. The segment covering 386–398 (EQISGSDSDYNNE) has biased composition (polar residues). The segment at 739 to 756 (CKCYNCGEEGHISPNCKK) adopts a CCHC-type zinc-finger fold. Residues 1162–1189 (DDRTNIQREKDQIEKADHNLELQKELNN) are a coiled coil.

It is found in the virion. The sequence is that of Putative Polyprotein CP from Cassava vein mosaic virus (CsVMV).